The chain runs to 1271 residues: Zinc finger transcription factor Trps1 (1271 aa).

Disordered regions lie at residues Met-1–Ser-76 and Ser-124–Pro-155. The span at Ser-34–Ser-49 shows a compositional bias: polar residues. A compositionally biased stretch (basic and acidic residues) spans His-54 to Glu-65. Over residues Pro-66–Ser-76 the composition is skewed to polar residues. The C2H2-type 1; atypical zinc finger occupies Phe-217–His-242. A C2H2-type 2; atypical zinc finger spans residues Phe-328–His-353. The disordered stretch occupies residues His-353–Gly-387. The C2H2-type 3; atypical zinc-finger motif lies at Tyr-426–His-451. The segment at Tyr-513–His-543 adopts a C2H2-type 4; atypical zinc-finger fold. 3 C2H2-type zinc fingers span residues His-604–His-627, His-656–His-679, and Tyr-682–His-705. The interval Gly-843–Arg-877 is disordered. The segment at Cys-886–Cys-910 adopts a GATA-type zinc-finger fold. 3 disordered regions span residues Arg-938–Gln-987, Ser-1031–Pro-1064, and Leu-1154–Asp-1196. Residues Ile-972–Glu-985 show a composition bias toward basic and acidic residues. Over residues Ser-1031–Lys-1049 the composition is skewed to low complexity. 2 stretches are compositionally biased toward basic and acidic residues: residues Gly-1050–Met-1062 and Asp-1170–Asp-1196. The segment at Pro-1153–Asp-1271 is transcriptional repressor domain. Residues Lys-1182 and Lys-1191 each participate in a glycyl lysine isopeptide (Lys-Gly) (interchain with G-Cter in SUMO) cross-link. C2H2-type zinc fingers lie at residues Thr-1205 to His-1227 and Phe-1233 to His-1257.

In terms of assembly, binds specifically to GATA sequences. In terms of processing, sumoylated. Sumoylation in the repressor domain inhibits the transcription repression activity. Sumoylation on Lys-1191 is the major site. Appears to be sumoylated on multiple sites.

The protein resides in the nucleus. Its function is as follows. Transcriptional repressor. Represses expression of GATA-regulated genes at selected sites and stages in vertebrate development. The sequence is that of Zinc finger transcription factor Trps1 (trps1) from Xenopus laevis (African clawed frog).